A 376-amino-acid polypeptide reads, in one-letter code: STVVGKCCKGNFGMSRFLLSNDFQRKLIVSGKESYYDHFSKRSYSSPSKAPGTESTITSTKIKMPNIGSEGFAFSSFLSTVNKNSRMINFSSCLKTPVKPEQIAANPVILKMTTELEKIPRALRWMCGGFPAIALCDAPEPWQLGFQDAATPIMQGIMDLHHDIFFFLVQILVFVLWVLSRALWCFRSKISPIPQRIVHGTTIEILWTILPSIILMFIAIPSFTLLYSMDDVVVDPAITIKAIGHQWYWSYEYSDYNNSDEQSLAFDSYMVPEDDLELGQLRLLEVDNRVVVPAKTHLRVLITSADVLHSWAVPSLGVKCDAVPGRLNQISTFIQREGVYYGQCSEICGTNHAFMPIVVEAVSTKDYGSWVSNQIQ.

Residues 164 to 184 (IFFFLVQILVFVLWVLSRALW) form a helical membrane-spanning segment. Over 185–204 (CFRSKISPIPQRIVHGTTIE) the chain is Mitochondrial matrix. A helical membrane pass occupies residues 205 to 225 (ILWTILPSIILMFIAIPSFTL). Residues 226 to 376 (LYSMDDVVVD…YGSWVSNQIQ (151 aa)) are Mitochondrial intermembrane-facing. Cu cation is bound by residues histidine 309, cysteine 344, glutamate 346, cysteine 348, histidine 352, and methionine 355. Mg(2+) is bound at residue glutamate 346.

This sequence belongs to the cytochrome c oxidase subunit 2 family. Component of the cytochrome c oxidase (complex IV, CIV), a multisubunit enzyme composed of a catalytic core of 3 subunits and several supernumerary subunits. The complex exists as a monomer or a dimer and forms supercomplexes (SCs) in the inner mitochondrial membrane with ubiquinol-cytochrome c oxidoreductase (cytochrome b-c1 complex, complex III, CIII). It depends on Cu cation as a cofactor.

The protein resides in the mitochondrion inner membrane. The enzyme catalyses 4 Fe(II)-[cytochrome c] + O2 + 8 H(+)(in) = 4 Fe(III)-[cytochrome c] + 2 H2O + 4 H(+)(out). Functionally, component of the cytochrome c oxidase, the last enzyme in the mitochondrial electron transport chain which drives oxidative phosphorylation. The respiratory chain contains 3 multisubunit complexes succinate dehydrogenase (complex II, CII), ubiquinol-cytochrome c oxidoreductase (cytochrome b-c1 complex, complex III, CIII) and cytochrome c oxidase (complex IV, CIV), that cooperate to transfer electrons derived from NADH and succinate to molecular oxygen, creating an electrochemical gradient over the inner membrane that drives transmembrane transport and the ATP synthase. Cytochrome c oxidase is the component of the respiratory chain that catalyzes the reduction of oxygen to water. Electrons originating from reduced cytochrome c in the intermembrane space (IMS) are transferred via the dinuclear copper A center (CU(A)) of subunit 2 and heme A of subunit 1 to the active site in subunit 1, a binuclear center (BNC) formed by heme A3 and copper B (CU(B)). The BNC reduces molecular oxygen to 2 water molecules using 4 electrons from cytochrome c in the IMS and 4 protons from the mitochondrial matrix. The sequence is that of Cytochrome c oxidase subunit 2, mitochondrial (COX2) from Vigna unguiculata (Cowpea).